Here is a 471-residue protein sequence, read N- to C-terminus: (13S,14R)-1,13-dihydroxy-N-methylcanadine 13-O-acetyltransferase AT1 (471 aa).

Belongs to the plant acyltransferase family.

It catalyses the reaction (13S,14R)-1,13-dihydroxy-N-methylcanadine + acetyl-CoA = (13S,14R)-13-O-acetyl-1-hydroxy-N-methylcanadine + CoA. It participates in alkaloid biosynthesis. Its function is as follows. Acetyltransferase involved in the biosynthesis of the benzylisoquinoline alkaloid noscapine. Converts (13S,14R)-1,13-dihydroxy-N-methylcanadine to (13S,14R)-13-O-acetyl-1-hydroxy-N-methylcanadine. The protein is (13S,14R)-1,13-dihydroxy-N-methylcanadine 13-O-acetyltransferase AT1 of Papaver somniferum (Opium poppy).